The primary structure comprises 165 residues: Protein C2-DOMAIN ABA-RELATED 8 (165 aa).

N-acetylmethionine is present on M1. Residues 1–106 enclose the C2 domain; it reads MENLVGLLRI…QGTDIQELTN (106 aa). Positions 21, 22, 27, 73, 74, 75, and 81 each coordinate Ca(2+).

The protein belongs to the plant CAR protein family. In terms of assembly, binds to PYR/PYL/RCAR abscisic acid intracellular receptors in an ABA-independent manner, both at the plasma membrane and in the nucleus.

The protein localises to the cell membrane. Its subcellular location is the nucleus. Functionally, stimulates the GTPase/ATPase activities of Obg-like ATPases. Mediates the transient calcium-dependent interaction of PYR/PYL/RCAR abscisic acid (ABA) receptors with the plasma membrane and thus regulates ABA sensitivity. This chain is Protein C2-DOMAIN ABA-RELATED 8, found in Arabidopsis thaliana (Mouse-ear cress).